Here is an 89-residue protein sequence, read N- to C-terminus: Small ribosomal subunit protein uS15 (89 aa).

Belongs to the universal ribosomal protein uS15 family. In terms of assembly, part of the 30S ribosomal subunit. Forms a bridge to the 50S subunit in the 70S ribosome, contacting the 23S rRNA.

Its function is as follows. One of the primary rRNA binding proteins, it binds directly to 16S rRNA where it helps nucleate assembly of the platform of the 30S subunit by binding and bridging several RNA helices of the 16S rRNA. Forms an intersubunit bridge (bridge B4) with the 23S rRNA of the 50S subunit in the ribosome. This Synechocystis sp. (strain ATCC 27184 / PCC 6803 / Kazusa) protein is Small ribosomal subunit protein uS15.